Consider the following 360-residue polypeptide: Protein-glutamate methylesterase/protein-glutamine glutaminase 3 (360 aa).

In terms of domain architecture, Response regulatory spans Arg14–Glu131. Residue Asp65 is modified to 4-aspartylphosphate. The region spanning Ala169 to Ala360 is the CheB-type methylesterase domain. Active-site residues include Ser181, His207, and Asp303.

Belongs to the CheB family. Post-translationally, phosphorylated by CheA. Phosphorylation of the N-terminal regulatory domain activates the methylesterase activity.

The protein localises to the cytoplasm. The catalysed reaction is [protein]-L-glutamate 5-O-methyl ester + H2O = L-glutamyl-[protein] + methanol + H(+). It carries out the reaction L-glutaminyl-[protein] + H2O = L-glutamyl-[protein] + NH4(+). Functionally, involved in chemotaxis. Part of a chemotaxis signal transduction system that modulates chemotaxis in response to various stimuli. Catalyzes the demethylation of specific methylglutamate residues introduced into the chemoreceptors (methyl-accepting chemotaxis proteins or MCP) by CheR. Also mediates the irreversible deamidation of specific glutamine residues to glutamic acid. The sequence is that of Protein-glutamate methylesterase/protein-glutamine glutaminase 3 from Burkholderia thailandensis (strain ATCC 700388 / DSM 13276 / CCUG 48851 / CIP 106301 / E264).